Here is a 297-residue protein sequence, read N- to C-terminus: 3-mercaptopyruvate sulfurtransferase (297 aa).

At Ala-2 the chain carries N-acetylalanine. A Rhodanese 1 domain is found at 25-144 (SSQPLKLLDA…WLNQNLPISS (120 aa)). At Ser-35 the chain carries Phosphoserine. Lys-40 bears the N6-acetyllysine; alternate mark. Residue Lys-40 is modified to N6-succinyllysine; alternate. Residues 145–160 (GKSHSEPAEFSAQLDP) form a hinge region. N6-succinyllysine occurs at positions 146 and 164. The region spanning 174–288 (DARRFQVVDA…WYMRAQPEHI (115 aa)) is the Rhodanese 2 domain. Arg-188 is a substrate binding site. Residue Cys-248 is the Cysteine persulfide intermediate of the active site.

As to quaternary structure, monomer (active form). Homodimer; disulfide-linked (inactive form). In terms of tissue distribution, expressed in the brain and retina. In the retina, localized to the inner and outer plexiform layer, the inner and outer nuclear layer and the outer segments of photoreceptors. In the brain, localized to neurons of mitral cell layers, glomerular, and external plexiform layers in the olfactory bulb. Also found in Purkinje cell stomata and proximal dendrites. In the spinal cord, localized to large neurons. In the cerebral cortex, localized to pyramidial neurons in layers II/III and V, and in layers I-VI of neocortical areas. In the hippocampus, found in CA1 and CA3 pyramidal cells.

It is found in the cytoplasm. It localises to the mitochondrion. Its subcellular location is the synapse. The protein resides in the synaptosome. The enzyme catalyses 2-oxo-3-sulfanylpropanoate + [thioredoxin]-dithiol = [thioredoxin]-disulfide + hydrogen sulfide + pyruvate + H(+). With respect to regulation, by oxidative stress, and thioredoxin. Under oxidative stress conditions, the catalytic cysteine site is converted to a sulfenate which inhibits the MPST enzyme activity. Reduced thioredoxin cleaves an intersubunit disulfide bond to turn on the redox switch and reactivate the enzyme. Inhibited by different oxidants, hydrogen peroxide and tetrathionate. Functionally, transfer of a sulfur ion to cyanide or to other thiol compounds. Also has weak rhodanese activity. Detoxifies cyanide and is required for thiosulfate biosynthesis. Acts as an antioxidant. In combination with cysteine aminotransferase (CAT), contributes to the catabolism of cysteine and is an important producer of hydrogen sulfide in the brain, retina and vascular endothelial cells. Hydrogen sulfide H(2)S is an important synaptic modulator, signaling molecule, smooth muscle contractor and neuroprotectant. Its production by the 3MST/CAT pathway is regulated by calcium ions. This is 3-mercaptopyruvate sulfurtransferase (Mpst) from Mus musculus (Mouse).